A 182-amino-acid chain; its full sequence is Peptide deformylase (182 aa).

Positions 110 and 153 each coordinate Fe cation. The active site involves Glu-154. His-157 contacts Fe cation.

It belongs to the polypeptide deformylase family. Fe(2+) serves as cofactor.

The enzyme catalyses N-terminal N-formyl-L-methionyl-[peptide] + H2O = N-terminal L-methionyl-[peptide] + formate. In terms of biological role, removes the formyl group from the N-terminal Met of newly synthesized proteins. Requires at least a dipeptide for an efficient rate of reaction. N-terminal L-methionine is a prerequisite for activity but the enzyme has broad specificity at other positions. The chain is Peptide deformylase from Halalkalibacterium halodurans (strain ATCC BAA-125 / DSM 18197 / FERM 7344 / JCM 9153 / C-125) (Bacillus halodurans).